Here is a 520-residue protein sequence, read N- to C-terminus: Pantetheine hydrolase VNN2 (520 aa).

The N-terminal stretch at 1 to 22 is a signal peptide; the sequence is MVTSSFPISVAVFALITLQVGT. The CN hydrolase domain maps to 31–306; the sequence is YEHAVILPNK…GKLLLSEVDS (276 aa). Residue asparagine 39 is glycosylated (N-linked (GlcNAc...) asparagine). Glutamate 80 (proton acceptor) is an active-site residue. Lysine 179 serves as the catalytic Proton donor. Cysteine 211 functions as the Nucleophile in the catalytic mechanism. 5 N-linked (GlcNAc...) asparagine glycosylation sites follow: asparagine 273, asparagine 347, asparagine 357, asparagine 411, and asparagine 468. Cysteine 493 carries GPI-anchor amidated cysteine lipidation. The propeptide at 494–520 is removed in mature form; that stretch reads GTSNSAITYLLIFILLMIIALQNIVML.

Belongs to the carbon-nitrogen hydrolase superfamily. BTD/VNN family. In terms of tissue distribution, widely expressed with higher expression in spleen and blood.

It localises to the cell membrane. It carries out the reaction (R)-pantetheine + H2O = cysteamine + (R)-pantothenate. Amidohydrolase that hydrolyzes specifically one of the carboamide linkages in D-pantetheine thus recycling pantothenic acid (vitamin B5) and releasing cysteamine. Involved in the thymus homing of bone marrow cells. May regulate beta-2 integrin-mediated cell adhesion, migration and motility of neutrophil. The protein is Pantetheine hydrolase VNN2 of Homo sapiens (Human).